The sequence spans 466 residues: GTPase Der (466 aa).

EngA-type G domains lie at 30–193 (PVVA…PEVS) and 203–376 (RRVA…ASWD). GTP is bound by residues 36–43 (GRPNVGKS), 83–87 (DTGGW), 145–148 (NKVD), 209–216 (GKPNVGKS), 256–260 (DTAGL), and 321–324 (NKWD). In terms of domain architecture, KH-like spans 377–459 (TRIATGPLNS…PIRINVRVRE (83 aa)).

Belongs to the TRAFAC class TrmE-Era-EngA-EngB-Septin-like GTPase superfamily. EngA (Der) GTPase family. As to quaternary structure, associates with the 50S ribosomal subunit.

In terms of biological role, GTPase that plays an essential role in the late steps of ribosome biogenesis. The chain is GTPase Der from Mycolicibacterium paratuberculosis (strain ATCC BAA-968 / K-10) (Mycobacterium paratuberculosis).